Here is a 456-residue protein sequence, read N- to C-terminus: tRNA modification GTPase MnmE (456 aa).

Residues R25, E82, and K121 each coordinate (6S)-5-formyl-5,6,7,8-tetrahydrofolate. Residues 217–379 (GIKVVIIGKP…LLDEIVKIAG (163 aa)) form the TrmE-type G domain. Residue N227 coordinates K(+). GTP is bound by residues 227 to 232 (NAGKSS), 246 to 252 (TDIAGTT), and 271 to 274 (DTAG). S231 contributes to the Mg(2+) binding site. K(+) is bound by residues T246, I248, and T251. A Mg(2+)-binding site is contributed by T252. K456 is a (6S)-5-formyl-5,6,7,8-tetrahydrofolate binding site.

The protein belongs to the TRAFAC class TrmE-Era-EngA-EngB-Septin-like GTPase superfamily. TrmE GTPase family. In terms of assembly, homodimer. Heterotetramer of two MnmE and two MnmG subunits. Requires K(+) as cofactor.

Its subcellular location is the cytoplasm. Its function is as follows. Exhibits a very high intrinsic GTPase hydrolysis rate. Involved in the addition of a carboxymethylaminomethyl (cmnm) group at the wobble position (U34) of certain tRNAs, forming tRNA-cmnm(5)s(2)U34. This chain is tRNA modification GTPase MnmE, found in Endomicrobium trichonymphae.